The following is a 411-amino-acid chain: L-cysteine:1D-myo-inositol 2-amino-2-deoxy-alpha-D-glucopyranoside ligase (411 aa).

Zn(2+) is bound at residue Cys-43. L-cysteinyl-5'-AMP-binding positions include 43–46 (CGIT), Thr-58, and 81–83 (NVT). The 'HIGH' region motif lies at 45–55 (ITPYDATHLGH). The short motif at 186 to 191 (QRGGDP) is the 'ERGGDP' region element. Trp-226 is a binding site for L-cysteinyl-5'-AMP. Position 230 (Cys-230) interacts with Zn(2+). L-cysteinyl-5'-AMP is bound at residue 248–250 (GSD). Residue His-255 coordinates Zn(2+). L-cysteinyl-5'-AMP is bound at residue Ile-282. The 'KMSKS' region motif lies at 288–292 (KMSKS).

The protein belongs to the class-I aminoacyl-tRNA synthetase family. MshC subfamily. In terms of assembly, monomer. It depends on Zn(2+) as a cofactor.

It catalyses the reaction 1D-myo-inositol 2-amino-2-deoxy-alpha-D-glucopyranoside + L-cysteine + ATP = 1D-myo-inositol 2-(L-cysteinylamino)-2-deoxy-alpha-D-glucopyranoside + AMP + diphosphate + H(+). Functionally, catalyzes the ATP-dependent condensation of GlcN-Ins and L-cysteine to form L-Cys-GlcN-Ins. The polypeptide is L-cysteine:1D-myo-inositol 2-amino-2-deoxy-alpha-D-glucopyranoside ligase (Mycobacterium marinum (strain ATCC BAA-535 / M)).